Reading from the N-terminus, the 51-residue chain is Small ribosomal subunit protein eS31 (51 aa).

Positions 21, 24, 39, and 42 each coordinate Zn(2+). The segment at 21–42 (CVRCSNGVFMADHGDRYACGKC) adopts a C4-type zinc-finger fold.

This sequence belongs to the eukaryotic ribosomal protein eS31 family. Part of the 30S ribosomal subunit. The cofactor is Zn(2+).

This chain is Small ribosomal subunit protein eS31, found in Methanothermobacter thermautotrophicus (strain ATCC 29096 / DSM 1053 / JCM 10044 / NBRC 100330 / Delta H) (Methanobacterium thermoautotrophicum).